The sequence spans 237 residues: Sugar fermentation stimulation protein homolog (237 aa).

This sequence belongs to the SfsA family.

The protein is Sugar fermentation stimulation protein homolog of Pseudomonas syringae pv. tomato (strain ATCC BAA-871 / DC3000).